Here is a 305-residue protein sequence, read N- to C-terminus: MVSSTLLVMSISLFLGLSILLVVHGKDFNQDIDITWGDGRGNILNNGTLLNLGLDQSSGSGFQSKAEYLYGKVDMQIKLVPGNSAGTVTTFYLKSQGLTWDEIDFEFLGNVSGDPYIVHTNVYTQGKGDREQQFYLWFDPTAAFHNYSILWNPSHIVFYIDGKPIREFKNLEVLGVAYPKNQPMRMYGSLWNADDWATRGGLVKTNWSQGPFVASFMNYNSENACVWSIVNGTTTTSPCSPGDSTSSSSSSTSEWFSQRGMDSSSKKVLRWVQRKFMVYNYCKDKKRFSNGLPVECTAKNKNTKS.

The signal sequence occupies residues 1-25 (MVSSTLLVMSISLFLGLSILLVVHG). One can recognise a GH16 domain in the interval 26 to 216 (KDFNQDIDIT…WSQGPFVASF (191 aa)). N46 carries an N-linked (GlcNAc...) asparagine glycan. E102 (nucleophile) is an active-site residue. The active-site Proton donor is the E106. Residue E106 participates in xyloglucan binding. N110 is a glycosylation site (N-linked (GlcNAc...) asparagine). Residues 119–121 (HTN) and 129–131 (DRE) contribute to the xyloglucan site. An N-linked (GlcNAc...) asparagine glycan is attached at N146. Xyloglucan contacts are provided by residues 195-196 (DW) and G200. N-linked (GlcNAc...) asparagine glycans are attached at residues N206 and N231. 2 disulfide bridges follow: C225–C239 and C282–C296. A compositionally biased stretch (low complexity) spans 236 to 253 (TSPCSPGDSTSSSSSSTS). Positions 236 to 258 (TSPCSPGDSTSSSSSSTSEWFSQ) are disordered. R287 lines the xyloglucan pocket.

It belongs to the glycosyl hydrolase 16 family. XTH group 2 subfamily. Contains at least one intrachain disulfide bond essential for its enzymatic activity. In terms of tissue distribution, predominantly expressed in green siliques.

It localises to the secreted. It is found in the cell wall. Its subcellular location is the extracellular space. The protein resides in the apoplast. The enzyme catalyses breaks a beta-(1-&gt;4) bond in the backbone of a xyloglucan and transfers the xyloglucanyl segment on to O-4 of the non-reducing terminal glucose residue of an acceptor, which can be a xyloglucan or an oligosaccharide of xyloglucan.. Its function is as follows. Catalyzes xyloglucan endohydrolysis (XEH) and/or endotransglycosylation (XET). Cleaves and religates xyloglucan polymers, an essential constituent of the primary cell wall, and thereby participates in cell wall construction of growing tissues. This chain is Probable xyloglucan endotransglucosylase/hydrolase protein 21 (XTH21), found in Arabidopsis thaliana (Mouse-ear cress).